The sequence spans 31 residues: Cytolysin Oshem 2 (31 aa).

It is found in the secreted. The protein localises to the nematocyst. The protein resides in the target cell membrane. In terms of biological role, cytolysin that shows weak hemolysis and weak myonecrosis. The sequence is that of Cytolysin Oshem 2 from Olindias sambaquiensis (Hydromedusa).